Consider the following 1163-residue polypeptide: Guanylate cyclase 32E (1163 aa).

The first 25 residues, 1–25 (MPGPCASAAAFSCILVLLLLGCQRS), serve as a signal peptide directing secretion. Over 29–469 (AAGATVSSMR…LCPRKKLDWR (441 aa)) the chain is Extracellular. Residues asparagine 147, asparagine 206, asparagine 368, and asparagine 390 are each glycosylated (N-linked (GlcNAc...) asparagine). The chain crosses the membrane as a helical span at residues 470-490 (YLVSGPLCALVVVVAIALLIK). Topologically, residues 491 to 1163 (HYRYEQTLAG…RSAPSITFRL (673 aa)) are cytoplasmic. In terms of domain architecture, Protein kinase spans 507–800 (MKDVTVINLG…IRLVRMHLKE (294 aa)). The 131-residue stretch at 873 to 1003 (TILFSDIVGF…DTVNTASRME (131 aa)) folds into the Guanylate cyclase domain.

It belongs to the adenylyl cyclase class-4/guanylyl cyclase family.

The protein localises to the membrane. The catalysed reaction is GTP = 3',5'-cyclic GMP + diphosphate. The protein is Guanylate cyclase 32E (Gyc32E) of Drosophila melanogaster (Fruit fly).